The chain runs to 416 residues: Protein LAZY 1 (416 aa).

A helical transmembrane segment spans residues 63–83 (FTFGGSGLLTIGTLGIAAVAI). The IGT motif motif lies at 69-75 (GLLTIGT). 2 disordered regions span residues 266–306 (AAAA…GMPA) and 337–361 (KKSR…DGPL). The segment covering 270 to 282 (GVGGDRAGKGGGY) has biased composition (gly residues). The Nuclear localization signal motif lies at 278–295 (KGGGYKTMKKRKVKDEKG).

It belongs to the LAZY family. In terms of tissue distribution, expressed specifically in the cells at the inner side of the vascular bundles of young leaf sheaths and peripheral cylinders of vascular bundles in the unelongated stems. Expressed in the leaf sheath pulvinus and the lamina joint.

It is found in the cell membrane. The protein localises to the nucleus. Its function is as follows. Involved in the regulation of shoot gravitropism and tiller angle through negative regulation of basipetal polar auxin transport (PAT). Acts as positive regulator of lateral auxin transport. Promotes vertical shoot growth. LAZY1 and TAC1 play opposite functions in the regulation of tiller growth angle. In Oryza sativa subsp. japonica (Rice), this protein is Protein LAZY 1.